A 521-amino-acid polypeptide reads, in one-letter code: uncharacterized protein (521 aa).

Residues Met1 to Ala22 form the signal peptide. The N-palmitoyl cysteine moiety is linked to residue Cys23. Cys23 carries S-diacylglycerol cysteine lipidation.

It belongs to the MG067/MG068/MG395 family.

Its subcellular location is the cell membrane. This is an uncharacterized protein from Mycoplasma pneumoniae (strain ATCC 29342 / M129 / Subtype 1) (Mycoplasmoides pneumoniae).